Consider the following 372-residue polypeptide: 2-aminoethylphosphonate--pyruvate transaminase 2 (372 aa).

At Lys192 the chain carries N6-(pyridoxal phosphate)lysine.

Belongs to the class-V pyridoxal-phosphate-dependent aminotransferase family. PhnW subfamily. Homodimer. The cofactor is pyridoxal 5'-phosphate.

The catalysed reaction is (2-aminoethyl)phosphonate + pyruvate = phosphonoacetaldehyde + L-alanine. Involved in phosphonate degradation. The chain is 2-aminoethylphosphonate--pyruvate transaminase 2 from Polaromonas sp. (strain JS666 / ATCC BAA-500).